A 183-amino-acid chain; its full sequence is NAD(P)H-quinone oxidoreductase subunit I, chloroplastic (183 aa).

2 4Fe-4S ferredoxin-type domains span residues 55–84 (GRIH…VDWE) and 95–124 (KNYS…MTEE). [4Fe-4S] cluster-binding residues include Cys-64, Cys-67, Cys-70, Cys-74, Cys-104, Cys-107, Cys-110, and Cys-114.

This sequence belongs to the complex I 23 kDa subunit family. As to quaternary structure, NDH is composed of at least 16 different subunits, 5 of which are encoded in the nucleus. It depends on [4Fe-4S] cluster as a cofactor.

It is found in the plastid. The protein resides in the chloroplast thylakoid membrane. It catalyses the reaction a plastoquinone + NADH + (n+1) H(+)(in) = a plastoquinol + NAD(+) + n H(+)(out). It carries out the reaction a plastoquinone + NADPH + (n+1) H(+)(in) = a plastoquinol + NADP(+) + n H(+)(out). Functionally, NDH shuttles electrons from NAD(P)H:plastoquinone, via FMN and iron-sulfur (Fe-S) centers, to quinones in the photosynthetic chain and possibly in a chloroplast respiratory chain. The immediate electron acceptor for the enzyme in this species is believed to be plastoquinone. Couples the redox reaction to proton translocation, and thus conserves the redox energy in a proton gradient. The polypeptide is NAD(P)H-quinone oxidoreductase subunit I, chloroplastic (Marchantia polymorpha (Common liverwort)).